The following is a 132-amino-acid chain: D-ribose pyranase (132 aa).

His-20 functions as the Proton donor in the catalytic mechanism. Substrate is bound by residues Asp-28, His-98, and 120–122 (YAN).

Belongs to the RbsD / FucU family. RbsD subfamily. As to quaternary structure, homodecamer.

The protein resides in the cytoplasm. It catalyses the reaction beta-D-ribopyranose = beta-D-ribofuranose. The protein operates within carbohydrate metabolism; D-ribose degradation; D-ribose 5-phosphate from beta-D-ribopyranose: step 1/2. Its function is as follows. Catalyzes the interconversion of beta-pyran and beta-furan forms of D-ribose. The protein is D-ribose pyranase of Geobacillus thermodenitrificans (strain NG80-2).